A 290-amino-acid polypeptide reads, in one-letter code: ATP synthase gamma chain (290 aa).

The protein belongs to the ATPase gamma chain family. In terms of assembly, F-type ATPases have 2 components, CF(1) - the catalytic core - and CF(0) - the membrane proton channel. CF(1) has five subunits: alpha(3), beta(3), gamma(1), delta(1), epsilon(1). CF(0) has three main subunits: a, b and c.

The protein resides in the cell inner membrane. Functionally, produces ATP from ADP in the presence of a proton gradient across the membrane. The gamma chain is believed to be important in regulating ATPase activity and the flow of protons through the CF(0) complex. The protein is ATP synthase gamma chain of Dictyoglomus turgidum (strain DSM 6724 / Z-1310).